Consider the following 420-residue polypeptide: Shaggy-related protein kinase delta (420 aa).

Residues 1–61 (MESHLGNGVG…DIIDGVGAEP (61 aa)) form a disordered region. Residues 10-26 (GSSRSAKNTKNTSSSVD) show a composition bias toward polar residues. Over residues 28–41 (LSRDMLEMKIRDKT) the composition is skewed to basic and acidic residues. A compositionally biased stretch (acidic residues) spans 42-53 (EADEERDSEPDI). The Protein kinase domain occupies 82-366 (YIAEHVVGTG…AVEACIHPFF (285 aa)). Residues 88 to 96 (VGTGSFGMV) and K111 contribute to the ATP site. The active-site Proton acceptor is the D207. Y242 is subject to Phosphotyrosine.

It belongs to the protein kinase superfamily. CMGC Ser/Thr protein kinase family. GSK-3 subfamily. Autophosphorylated mainly on threonine and serine residues.

The catalysed reaction is L-seryl-[protein] + ATP = O-phospho-L-seryl-[protein] + ADP + H(+). It catalyses the reaction L-threonyl-[protein] + ATP = O-phospho-L-threonyl-[protein] + ADP + H(+). Functionally, may mediate extracellular signals to regulate transcription in differentiating cells. The protein is Shaggy-related protein kinase delta (ASK4) of Arabidopsis thaliana (Mouse-ear cress).